Consider the following 608-residue polypeptide: 2',5'-phosphodiesterase 12 (608 aa).

Residues 1-16 (MWRLPGRAALRGVRSV) constitute a mitochondrion transit peptide. The segment at 91 to 111 (AKKSRKNRAHSSGGAACAATG) is disordered. A compositionally biased stretch (low complexity) spans 100 to 111 (HSSGGAACAATG). At S216 the chain carries Phosphoserine. 3 residues coordinate Mg(2+): E350, D495, and N497. Residue D495 is the Proton donor/acceptor of the active site.

It belongs to the CCR4/nocturin family. It depends on Mg(2+) as a cofactor.

It is found in the mitochondrion matrix. The catalysed reaction is Exonucleolytic cleavage of poly(A) to 5'-AMP.. Enzyme that cleaves 2',5'-phosphodiester bond linking adenosines of the 5'-triphosphorylated oligoadenylates, triphosphorylated oligoadenylates referred as 2-5A modulates the 2-5A system. Degrades triphosphorylated 2-5A to produce AMP and ATP. Also cleaves 3',5'-phosphodiester bond of oligoadenylates. Plays a role as a negative regulator of the 2-5A system that is one of the major pathways for antiviral and antitumor functions induced by interferons (IFNs). Suppression of this enzyme increases cellular 2-5A levels and decreases viral replication in cultured small-airway epithelial cells. In Rattus norvegicus (Rat), this protein is 2',5'-phosphodiesterase 12 (Pde12).